We begin with the raw amino-acid sequence, 124 residues long: UPF0337 protein blr1496 (124 aa).

This sequence belongs to the UPF0337 (CsbD) family.

The polypeptide is UPF0337 protein blr1496 (Bradyrhizobium diazoefficiens (strain JCM 10833 / BCRC 13528 / IAM 13628 / NBRC 14792 / USDA 110)).